Reading from the N-terminus, the 328-residue chain is Phosphatidylglycerol--prolipoprotein diacylglyceryl transferase (328 aa).

Transmembrane regions (helical) follow at residues 15–35 (VIQG…ILIS), 57–77 (IFMF…STLV), and 106–126 (GMAI…TINT). R156 serves as a coordination point for a 1,2-diacyl-sn-glycero-3-phospho-(1'-sn-glycerol). A run of 2 helical transmembrane segments spans residues 242-262 (GFIF…IEYL) and 289-309 (ISMG…WIIV).

The protein belongs to the Lgt family.

The protein resides in the cell inner membrane. It catalyses the reaction L-cysteinyl-[prolipoprotein] + a 1,2-diacyl-sn-glycero-3-phospho-(1'-sn-glycerol) = an S-1,2-diacyl-sn-glyceryl-L-cysteinyl-[prolipoprotein] + sn-glycerol 1-phosphate + H(+). It participates in protein modification; lipoprotein biosynthesis (diacylglyceryl transfer). Its function is as follows. Catalyzes the transfer of the diacylglyceryl group from phosphatidylglycerol to the sulfhydryl group of the N-terminal cysteine of a prolipoprotein, the first step in the formation of mature lipoproteins. This chain is Phosphatidylglycerol--prolipoprotein diacylglyceryl transferase, found in Borreliella burgdorferi (strain ATCC 35210 / DSM 4680 / CIP 102532 / B31) (Borrelia burgdorferi).